The chain runs to 130 residues: Small ribosomal subunit protein uS8 (130 aa).

The protein belongs to the universal ribosomal protein uS8 family. As to quaternary structure, part of the 30S ribosomal subunit. Contacts proteins S5 and S12.

Its function is as follows. One of the primary rRNA binding proteins, it binds directly to 16S rRNA central domain where it helps coordinate assembly of the platform of the 30S subunit. This is Small ribosomal subunit protein uS8 from Coxiella burnetii (strain Dugway 5J108-111).